The chain runs to 350 residues: Melatonin receptor type 1A (350 aa).

Topologically, residues 1–29 (MQGNGSALPNASQPVLRGDGARPSWLASA) are extracellular. Asn4 and Asn10 each carry an N-linked (GlcNAc...) asparagine glycan. A helical transmembrane segment spans residues 30–50 (LACVLIFTIVVDILGNLLVIL). Residues 51 to 63 (SVYRNKKLRNAGN) are Cytoplasmic-facing. The chain crosses the membrane as a helical span at residues 64–84 (IFVVSLAVADLVVAIYPYPLV). The Extracellular segment spans residues 85–102 (LMSIFNNGWNLGYLHCQV). A disulfide bridge connects residues Cys100 and Cys177. Residues 103–123 (SGFLMGLSVIGSIFNITGIAI) traverse the membrane as a helical segment. Topologically, residues 124-142 (NRYCYICHSLKYDKLYSSK) are cytoplasmic. A helical transmembrane segment spans residues 143 to 163 (NSLCYVLLIWLLTLAAVLPNL). The melatonin site is built by Asn162 and Gln181. Residues 164–187 (RAGTLQYDPRIYSCTFAQSVSSAY) lie on the Extracellular side of the membrane. A helical transmembrane segment spans residues 188 to 208 (TIAVVVFHFLVPMIIVIFCYL). The Cytoplasmic segment spans residues 209–240 (RIWILVLQVRQRVKPDRKPKLKPQDFRNFVTM). The helical transmembrane segment at 241–261 (FVVFVLFAICWAPLNFIGLAV) threads the bilayer. Residues 262 to 274 (ASDPASMVPRIPE) are Extracellular-facing. Residues 275–295 (WLFVASYYMAYFNSCLNAIIY) traverse the membrane as a helical segment. Over 296 to 350 (GLLNQNFRKEYRRIIVSLCTARVFFVDSSNDVADRVKWKPSPLMTNNNVVKVDSV) the chain is Cytoplasmic.

It belongs to the G-protein coupled receptor 1 family. In terms of tissue distribution, expressed in hypophyseal pars tuberalis and hypothalamic suprachiasmatic nuclei (SCN). Hippocampus.

The protein resides in the cell membrane. High affinity receptor for melatonin. Likely to mediate the reproductive and circadian actions of melatonin. The activity of this receptor is mediated by pertussis toxin sensitive G proteins that inhibit adenylate cyclase activity. Possibly involved in sleep induction, by melatonin activation of the potassium channel KCNMA1/BK and the dissociation of G-beta and G-gamma subunits, thereby decreasing synaptic transmission. This is Melatonin receptor type 1A (MTNR1A) from Homo sapiens (Human).